Reading from the N-terminus, the 138-residue chain is ATP synthase epsilon chain (138 aa).

It belongs to the ATPase epsilon chain family. As to quaternary structure, F-type ATPases have 2 components, CF(1) - the catalytic core - and CF(0) - the membrane proton channel. CF(1) has five subunits: alpha(3), beta(3), gamma(1), delta(1), epsilon(1). CF(0) has three main subunits: a, b and c.

It is found in the cell membrane. In terms of biological role, produces ATP from ADP in the presence of a proton gradient across the membrane. The polypeptide is ATP synthase epsilon chain (Caldanaerobacter subterraneus subsp. tengcongensis (strain DSM 15242 / JCM 11007 / NBRC 100824 / MB4) (Thermoanaerobacter tengcongensis)).